The chain runs to 425 residues: Putative TRAP transporter large permease protein HI_1029 (425 aa).

13 consecutive transmembrane segments (helical) span residues 3 to 23 (VIIF…VAFA), 24 to 44 (LLIC…QILA), 54 to 74 (FSLM…EGGL), 93 to 113 (LGFV…SAVA), 139 to 159 (LIGT…FIVF), 169 to 189 (KLFL…AILW), 217 to 237 (VWAL…IFTP), 241 to 261 (GVVA…ELPL), 275 to 295 (TAVV…ITVA), 312 to 332 (PTIL…VMDL), 334 to 354 (PTVL…GIDP), 355 to 375 (VYFG…PPVG), and 399 to 419 (YLGM…LILM).

Belongs to the TRAP transporter large permease family.

It localises to the cell inner membrane. The chain is Putative TRAP transporter large permease protein HI_1029 from Haemophilus influenzae (strain ATCC 51907 / DSM 11121 / KW20 / Rd).